The primary structure comprises 409 residues: Runt-related transcription factor 3 (409 aa).

Disordered regions lie at residues 1 to 51 (MRIP…RTRP), 177 to 248 (GPRE…QFDR), and 346 to 409 (AGGG…WRPY). Polar residues predominate over residues 7 to 17 (PSTSRRFTPPS). In terms of domain architecture, Runt spans 55–183 (SMVDVLADHA…TVDGPREPRR (129 aa)). Residues 187 to 204 (KIEDQTKAFPDRFGDLRM) show a composition bias toward basic and acidic residues. A Glycyl lysine isopeptide (Lys-Gly) (interchain with G-Cter in SUMO2) cross-link involves residue Lys-193. Residues 207–238 (TPSTPSPRGSLSTTSHFSSQAQTPIQGSSDLN) are compositionally biased toward polar residues. Ser-241 is modified (phosphoserine). Composition is skewed to polar residues over residues 355-376 (RMLT…NPSL) and 387-396 (SHSNSPTALS). The span at 400–409 (RMDEAVWRPY) shows a compositional bias: basic and acidic residues.

As to quaternary structure, heterodimer with CBFB. RUNX3 binds DNA as a monomer and through the Runt domain. DNA-binding is increased by heterodimerization. Interacts with TLE1 and SUV39H1. The tyrosine phosphorylated form (via runt domain) interacts with SRC (via protein kinase domain). Interacts with FYN and LCK. Interacts with FOXP3. Interacts with ZFHX3. Interacts with TBX21. In terms of processing, phosphorylated on tyrosine residues by SRC. Phosphorylated by LCK and FYN.

Its subcellular location is the nucleus. The protein localises to the cytoplasm. Functionally, forms the heterodimeric complex core-binding factor (CBF) with CBFB. RUNX members modulate the transcription of their target genes through recognizing the core consensus binding sequence 5'-TGTGGT-3', or very rarely, 5'-TGCGGT-3', within their regulatory regions via their runt domain, while CBFB is a non-DNA-binding regulatory subunit that allosterically enhances the sequence-specific DNA-binding capacity of RUNX. The heterodimers bind to the core site of a number of enhancers and promoters, including murine leukemia virus, polyomavirus enhancer, T-cell receptor enhancers, LCK, IL3 and GM-CSF promoters. May be involved in the control of cellular proliferation and/or differentiation. In association with ZFHX3, up-regulates CDKN1A promoter activity following TGF-beta stimulation. CBF complexes repress ZBTB7B transcription factor during cytotoxic (CD8+) T cell development. They bind to RUNX-binding sequence within the ZBTB7B locus acting as transcriptional silencer and allowing for cytotoxic T cell differentiation. CBF complexes binding to the transcriptional silencer is essential for recruitment of nuclear protein complexes that catalyze epigenetic modifications to establish epigenetic ZBTB7B silencing. Necessary for the development and survival of sensory neurons expressing parvalbumin. The protein is Runt-related transcription factor 3 (Runx3) of Mus musculus (Mouse).